The chain runs to 364 residues: DNA replication and repair protein RecF (364 aa).

33 to 40 lines the ATP pocket; it reads GENGSGKT.

The protein belongs to the RecF family.

The protein localises to the cytoplasm. The RecF protein is involved in DNA metabolism; it is required for DNA replication and normal SOS inducibility. RecF binds preferentially to single-stranded, linear DNA. It also seems to bind ATP. This chain is DNA replication and repair protein RecF, found in Rickettsia felis (strain ATCC VR-1525 / URRWXCal2) (Rickettsia azadi).